The primary structure comprises 127 residues: Holo-[acyl-carrier-protein] synthase (127 aa).

Mg(2+) contacts are provided by aspartate 9 and glutamate 58.

Belongs to the P-Pant transferase superfamily. AcpS family. It depends on Mg(2+) as a cofactor.

The protein resides in the cytoplasm. It catalyses the reaction apo-[ACP] + CoA = holo-[ACP] + adenosine 3',5'-bisphosphate + H(+). Transfers the 4'-phosphopantetheine moiety from coenzyme A to a Ser of acyl-carrier-protein. In Shewanella baltica (strain OS195), this protein is Holo-[acyl-carrier-protein] synthase.